A 699-amino-acid chain; its full sequence is Elongation factor G (699 aa).

Residues 8–290 form the tr-type G domain; it reads NKYRNLGIMA…KVIELLPSPV (283 aa). GTP-binding positions include 17-24, 88-92, and 142-145; these read AHIDAGKT, DTPGH, and NKMD.

This sequence belongs to the TRAFAC class translation factor GTPase superfamily. Classic translation factor GTPase family. EF-G/EF-2 subfamily.

It is found in the cytoplasm. Catalyzes the GTP-dependent ribosomal translocation step during translation elongation. During this step, the ribosome changes from the pre-translocational (PRE) to the post-translocational (POST) state as the newly formed A-site-bound peptidyl-tRNA and P-site-bound deacylated tRNA move to the P and E sites, respectively. Catalyzes the coordinated movement of the two tRNA molecules, the mRNA and conformational changes in the ribosome. This chain is Elongation factor G, found in Dichelobacter nodosus (strain VCS1703A).